Here is an 88-residue protein sequence, read N- to C-terminus: Small ribosomal subunit protein uS17 (88 aa).

Belongs to the universal ribosomal protein uS17 family. As to quaternary structure, part of the 30S ribosomal subunit.

Functionally, one of the primary rRNA binding proteins, it binds specifically to the 5'-end of 16S ribosomal RNA. The protein is Small ribosomal subunit protein uS17 of Xylella fastidiosa (strain M23).